The chain runs to 878 residues: Phosphoenolpyruvate carboxylase (878 aa).

Residues His-138 and Lys-545 contribute to the active site.

The protein belongs to the PEPCase type 1 family. Mg(2+) is required as a cofactor.

The enzyme catalyses oxaloacetate + phosphate = phosphoenolpyruvate + hydrogencarbonate. Forms oxaloacetate, a four-carbon dicarboxylic acid source for the tricarboxylic acid cycle. The sequence is that of Phosphoenolpyruvate carboxylase from Shewanella sediminis (strain HAW-EB3).